The primary structure comprises 325 residues: Phosphate acyltransferase (325 aa).

The protein belongs to the PlsX family. As to quaternary structure, homodimer. Probably interacts with PlsY.

Its subcellular location is the cytoplasm. The enzyme catalyses a fatty acyl-[ACP] + phosphate = an acyl phosphate + holo-[ACP]. It functions in the pathway lipid metabolism; phospholipid metabolism. Catalyzes the reversible formation of acyl-phosphate (acyl-PO(4)) from acyl-[acyl-carrier-protein] (acyl-ACP). This enzyme utilizes acyl-ACP as fatty acyl donor, but not acyl-CoA. The chain is Phosphate acyltransferase from Mycoplasmopsis pulmonis (strain UAB CTIP) (Mycoplasma pulmonis).